A 483-amino-acid chain; its full sequence is Replication factor C large subunit (483 aa).

Residue 43 to 50 coordinates ATP; the sequence is GKPGIGKT. The segment covering 417 to 442 has biased composition (basic and acidic residues); the sequence is ELKKKKKEEDAKGKKARGSKKEKEPI. The tract at residues 417-483 is disordered; that stretch reads ELKKKKKEED…KSSQSTLFSF (67 aa). Residues 448–457 show a composition bias toward polar residues; sequence SIDSFSSQEP.

This sequence belongs to the activator 1 small subunits family. RfcL subfamily. As to quaternary structure, heteromultimer composed of small subunits (RfcS) and large subunits (RfcL).

Its function is as follows. Part of the RFC clamp loader complex which loads the PCNA sliding clamp onto DNA. The chain is Replication factor C large subunit from Methanospirillum hungatei JF-1 (strain ATCC 27890 / DSM 864 / NBRC 100397 / JF-1).